A 478-amino-acid polypeptide reads, in one-letter code: Glycogen synthase (478 aa).

K15 serves as a coordination point for ADP-alpha-D-glucose.

Belongs to the glycosyltransferase 1 family. Bacterial/plant glycogen synthase subfamily.

The enzyme catalyses [(1-&gt;4)-alpha-D-glucosyl](n) + ADP-alpha-D-glucose = [(1-&gt;4)-alpha-D-glucosyl](n+1) + ADP + H(+). It participates in glycan biosynthesis; glycogen biosynthesis. In terms of biological role, synthesizes alpha-1,4-glucan chains using ADP-glucose. This Caldicellulosiruptor bescii (strain ATCC BAA-1888 / DSM 6725 / KCTC 15123 / Z-1320) (Anaerocellum thermophilum) protein is Glycogen synthase.